We begin with the raw amino-acid sequence, 232 residues long: Phosphatidylserine decarboxylase proenzyme (232 aa).

Catalysis depends on serine 190, which acts as the Schiff-base intermediate with substrate; via pyruvic acid. Position 190 is a pyruvic acid (Ser); by autocatalysis (serine 190).

This sequence belongs to the phosphatidylserine decarboxylase family. PSD-A subfamily. Heterodimer of a large membrane-associated beta subunit and a small pyruvoyl-containing alpha subunit. Pyruvate serves as cofactor. Post-translationally, is synthesized initially as an inactive proenzyme. Formation of the active enzyme involves a self-maturation process in which the active site pyruvoyl group is generated from an internal serine residue via an autocatalytic post-translational modification. Two non-identical subunits are generated from the proenzyme in this reaction, and the pyruvate is formed at the N-terminus of the alpha chain, which is derived from the carboxyl end of the proenzyme. The post-translation cleavage follows an unusual pathway, termed non-hydrolytic serinolysis, in which the side chain hydroxyl group of the serine supplies its oxygen atom to form the C-terminus of the beta chain, while the remainder of the serine residue undergoes an oxidative deamination to produce ammonia and the pyruvoyl prosthetic group on the alpha chain.

Its subcellular location is the cell membrane. The enzyme catalyses a 1,2-diacyl-sn-glycero-3-phospho-L-serine + H(+) = a 1,2-diacyl-sn-glycero-3-phosphoethanolamine + CO2. It participates in phospholipid metabolism; phosphatidylethanolamine biosynthesis; phosphatidylethanolamine from CDP-diacylglycerol: step 2/2. Functionally, catalyzes the formation of phosphatidylethanolamine (PtdEtn) from phosphatidylserine (PtdSer). In Rhodopseudomonas palustris (strain HaA2), this protein is Phosphatidylserine decarboxylase proenzyme.